Reading from the N-terminus, the 339-residue chain is Undecaprenyl-phosphate 4-deoxy-4-formamido-L-arabinose transferase (339 aa).

Transmembrane regions (helical) follow at residues 235-255 (LSLVGGGMALAGFLFALFLLV) and 269-289 (LFVLFAVLFMFSGVQLLGMGL).

The protein belongs to the glycosyltransferase 2 family.

It localises to the cell inner membrane. It catalyses the reaction UDP-4-deoxy-4-formamido-beta-L-arabinose + di-trans,octa-cis-undecaprenyl phosphate = 4-deoxy-4-formamido-alpha-L-arabinopyranosyl di-trans,octa-cis-undecaprenyl phosphate + UDP. The protein operates within glycolipid biosynthesis; 4-amino-4-deoxy-alpha-L-arabinose undecaprenyl phosphate biosynthesis; 4-amino-4-deoxy-alpha-L-arabinose undecaprenyl phosphate from UDP-4-deoxy-4-formamido-beta-L-arabinose and undecaprenyl phosphate: step 1/2. It participates in bacterial outer membrane biogenesis; lipopolysaccharide biosynthesis. Its function is as follows. Catalyzes the transfer of 4-deoxy-4-formamido-L-arabinose from UDP to undecaprenyl phosphate. The modified arabinose is attached to lipid A and is required for resistance to polymyxin and cationic antimicrobial peptides. The chain is Undecaprenyl-phosphate 4-deoxy-4-formamido-L-arabinose transferase from Pseudomonas paraeruginosa (strain DSM 24068 / PA7) (Pseudomonas aeruginosa (strain PA7)).